Here is a 403-residue protein sequence, read N- to C-terminus: GTPase Obg (403 aa).

One can recognise an Obg domain in the interval 1-159 (MKFIDESLIR…RDLLLELMLL (159 aa)). The region spanning 160-333 (ADVGMLGFPN…LCRDIMDFII (174 aa)) is the OBG-type G domain. GTP-binding positions include 166–173 (GFPNAGKS), 191–195 (FTTLV), 213–216 (DIPG), 283–286 (NKID), and 314–316 (SAA). The Mg(2+) site is built by Ser173 and Thr193. A disordered region spans residues 364–403 (YQFDDDEDWDDDWTEEDDDEDWDDDWSEEDDEGIEFIYKP). The segment covering 365 to 397 (QFDDDEDWDDDWTEEDDDEDWDDDWSEEDDEGI) has biased composition (acidic residues).

This sequence belongs to the TRAFAC class OBG-HflX-like GTPase superfamily. OBG GTPase family. In terms of assembly, monomer. It depends on Mg(2+) as a cofactor.

The protein resides in the cytoplasm. Its function is as follows. An essential GTPase which binds GTP, GDP and possibly (p)ppGpp with moderate affinity, with high nucleotide exchange rates and a fairly low GTP hydrolysis rate. Plays a role in control of the cell cycle, stress response, ribosome biogenesis and in those bacteria that undergo differentiation, in morphogenesis control. The protein is GTPase Obg of Haemophilus influenzae (strain PittGG).